Here is a 461-residue protein sequence, read N- to C-terminus: Argininosuccinate lyase (461 aa).

The protein belongs to the lyase 1 family. Argininosuccinate lyase subfamily.

It localises to the cytoplasm. The enzyme catalyses 2-(N(omega)-L-arginino)succinate = fumarate + L-arginine. The protein operates within amino-acid biosynthesis; L-arginine biosynthesis; L-arginine from L-ornithine and carbamoyl phosphate: step 3/3. This is Argininosuccinate lyase from Aeromonas salmonicida (strain A449).